A 447-amino-acid polypeptide reads, in one-letter code: Argininosuccinate synthase (447 aa).

Residues 17–25 (AFSGGLDTS) and alanine 43 each bind ATP. Tyrosine 99 serves as a coordination point for L-citrulline. Residues glycine 129 and threonine 131 each contribute to the ATP site. Positions 131, 135, and 136 each coordinate L-aspartate. Residue asparagine 135 coordinates L-citrulline. Aspartate 136 is an ATP binding site. The L-citrulline site is built by arginine 139 and serine 192. Position 194 (aspartate 194) interacts with ATP. Residues threonine 201, glutamate 203, and glutamate 280 each contribute to the L-citrulline site.

This sequence belongs to the argininosuccinate synthase family. Type 2 subfamily. As to quaternary structure, homotetramer.

It localises to the cytoplasm. It carries out the reaction L-citrulline + L-aspartate + ATP = 2-(N(omega)-L-arginino)succinate + AMP + diphosphate + H(+). It participates in amino-acid biosynthesis; L-arginine biosynthesis; L-arginine from L-ornithine and carbamoyl phosphate: step 2/3. The polypeptide is Argininosuccinate synthase (Salmonella heidelberg (strain SL476)).